A 299-amino-acid chain; its full sequence is Homoserine O-acetyltransferase (299 aa).

The active-site Acyl-thioester intermediate is Cys142. Positions 163 and 192 each coordinate substrate. The active-site Proton acceptor is His235. Glu237 is an active-site residue. Residue Arg249 coordinates substrate.

The protein belongs to the MetA family.

Its subcellular location is the cytoplasm. It carries out the reaction L-homoserine + acetyl-CoA = O-acetyl-L-homoserine + CoA. Its pathway is amino-acid biosynthesis; L-methionine biosynthesis via de novo pathway; O-acetyl-L-homoserine from L-homoserine: step 1/1. In terms of biological role, transfers an acetyl group from acetyl-CoA to L-homoserine, forming acetyl-L-homoserine. This Synechococcus elongatus (strain ATCC 33912 / PCC 7942 / FACHB-805) (Anacystis nidulans R2) protein is Homoserine O-acetyltransferase.